Consider the following 56-residue polypeptide: U-megalopygitoxin(2)-Mo9 (56 aa).

The N-terminal stretch at 1–25 (MKFIVLLLIVTSVLMMFAVTTEASP) is a signal peptide. Gln26 bears the Pyrrolidone carboxylic acid mark. Thr55 is modified (threonine amide).

This sequence belongs to the caterpillar 2 family. Contains 2 disulfide bonds. Expressed by the venom apparatus.

Its subcellular location is the secreted. Probable toxin. The protein is U-megalopygitoxin(2)-Mo9 of Megalopyge opercularis (Southern flannel moth).